Consider the following 255-residue polypeptide: Pimeloyl-[acyl-carrier protein] methyl ester esterase (255 aa).

Residues 16–242 enclose the AB hydrolase-1 domain; the sequence is LVLLHGWGMN…SSHAPFITEP (227 aa). Substrate is bound by residues W22, 82-83, and 143-147; these read SL and FMALQ. The active-site Nucleophile is S82. Active-site residues include D207 and H235. H235 provides a ligand contact to substrate.

The protein belongs to the AB hydrolase superfamily. Carboxylesterase BioH family. Monomer.

The protein resides in the cytoplasm. The enzyme catalyses 6-carboxyhexanoyl-[ACP] methyl ester + H2O = 6-carboxyhexanoyl-[ACP] + methanol + H(+). Its pathway is cofactor biosynthesis; biotin biosynthesis. Functionally, the physiological role of BioH is to remove the methyl group introduced by BioC when the pimeloyl moiety is complete. It allows to synthesize pimeloyl-ACP via the fatty acid synthetic pathway through the hydrolysis of the ester bonds of pimeloyl-ACP esters. The chain is Pimeloyl-[acyl-carrier protein] methyl ester esterase from Vibrio vulnificus (strain CMCP6).